The sequence spans 452 residues: Probable diguanylate cyclase DgcT (452 aa).

Topologically, residues 1–7 (MEKDYLR) are cytoplasmic. Residues 8–28 (ISSTVLVSLLFGLALVLVNSW) traverse the membrane as a helical segment. The Periplasmic portion of the chain corresponds to 29 to 45 (FNQPGVEEVVPRSTYLM). A helical membrane pass occupies residues 46–66 (VMIALFFIDTVAFIFMQLYFI). Over 67 to 74 (YDRRQFSN) the chain is Cytoplasmic. A helical membrane pass occupies residues 75–95 (CVLSLAFLSCLIYFVITVIII). Topologically, residues 96-111 (QQIIEERLTSSVVQND) are periplasmic. Residues 112–132 (IAIYYLFRQMSLCILIFLALV) traverse the membrane as a helical segment. The Cytoplasmic portion of the chain corresponds to 133 to 148 (NKVSENTKQRNLFSKK). The helical transmembrane segment at 149-169 (MTLCISLFFVFGGPIVAHILS) threads the bilayer. Over 170–195 (SHYESYNLHIAELTNENGQVVWKASY) the chain is Periplasmic. A helical transmembrane segment spans residues 196–216 (VTIMIFMWLTLLSVNLYFNGL). Residues 217–219 (RYD) are Cytoplasmic-facing. The chain crosses the membrane as a helical span at residues 220-240 (IWNGVTVIAFCAVLYNISLLF). The Periplasmic segment spans residues 241–254 (MSRYSVSTWYISRT). A helical membrane pass occupies residues 255–275 (IEVVSKLTVMVIFMCHIFSAL). Residues 276–452 (RVTKNIAHRD…RDVVNFCESP (177 aa)) lie on the Cytoplasmic side of the membrane. A GGDEF domain is found at 310–445 (TPYCVMIMDI…GRNKVVVRDV (136 aa)). The Mg(2+) site is built by D318 and I319. Substrate-binding residues include N326, H331, and D335. E361 is a binding site for Mg(2+). E361 acts as the Proton acceptor in catalysis. R381 provides a ligand contact to substrate.

Homodimer. Requires Mg(2+) as cofactor.

Its subcellular location is the cell inner membrane. The enzyme catalyses 2 GTP = 3',3'-c-di-GMP + 2 diphosphate. It participates in purine metabolism; 3',5'-cyclic di-GMP biosynthesis. Probably catalyzes the synthesis of cyclic-di-GMP (c-di-GMP) via the condensation of 2 GTP molecules. Overexpression leads to a strong repression of swimming; swimming returns to normal when residues 359-360 are both mutated to Ala. Overexpression also leads to a 20-fold increase in c-di-GMP levels in vivo. Cyclic-di-GMP is a second messenger which controls cell surface-associated traits in bacteria. In Escherichia coli (strain K12), this protein is Probable diguanylate cyclase DgcT.